Consider the following 701-residue polypeptide: Elongation factor G (701 aa).

The tr-type G domain occupies 8–290; sequence SLYRNIGISA…AVVELLPAPT (283 aa). GTP-binding positions include 17–24, 88–92, and 142–145; these read AHIDAGKT, DTPGH, and NKMD.

This sequence belongs to the TRAFAC class translation factor GTPase superfamily. Classic translation factor GTPase family. EF-G/EF-2 subfamily.

It localises to the cytoplasm. Catalyzes the GTP-dependent ribosomal translocation step during translation elongation. During this step, the ribosome changes from the pre-translocational (PRE) to the post-translocational (POST) state as the newly formed A-site-bound peptidyl-tRNA and P-site-bound deacylated tRNA move to the P and E sites, respectively. Catalyzes the coordinated movement of the two tRNA molecules, the mRNA and conformational changes in the ribosome. The sequence is that of Elongation factor G from Neisseria meningitidis serogroup B (strain ATCC BAA-335 / MC58).